The chain runs to 277 residues: NADPH-dependent 7-cyano-7-deazaguanine reductase (277 aa).

Residue 83-85 coordinates substrate; it reads VES. Residue 85–86 participates in NADPH binding; that stretch reads SK. Cysteine 184 serves as the catalytic Thioimide intermediate. Aspartate 191 functions as the Proton donor in the catalytic mechanism. A substrate-binding site is contributed by 223–224; that stretch reads HE. 252 to 253 is a binding site for NADPH; the sequence is RG.

It belongs to the GTP cyclohydrolase I family. QueF type 2 subfamily. Homodimer.

It localises to the cytoplasm. The catalysed reaction is 7-aminomethyl-7-carbaguanine + 2 NADP(+) = 7-cyano-7-deazaguanine + 2 NADPH + 3 H(+). Its pathway is tRNA modification; tRNA-queuosine biosynthesis. Functionally, catalyzes the NADPH-dependent reduction of 7-cyano-7-deazaguanine (preQ0) to 7-aminomethyl-7-deazaguanine (preQ1). The protein is NADPH-dependent 7-cyano-7-deazaguanine reductase of Cupriavidus metallidurans (strain ATCC 43123 / DSM 2839 / NBRC 102507 / CH34) (Ralstonia metallidurans).